The sequence spans 328 residues: Malate dehydrogenase (328 aa).

11-17 (GAAGQIG) is an NAD(+) binding site. R94 and R100 together coordinate substrate. Residues N107, Q114, and 131-133 (VGN) each bind NAD(+). Substrate contacts are provided by N133 and R164. Catalysis depends on H189, which acts as the Proton acceptor.

Belongs to the LDH/MDH superfamily. MDH type 2 family.

The catalysed reaction is (S)-malate + NAD(+) = oxaloacetate + NADH + H(+). Catalyzes the reversible oxidation of malate to oxaloacetate. The sequence is that of Malate dehydrogenase from Xylella fastidiosa (strain M12).